The sequence spans 378 residues: Erythronate-4-phosphate dehydrogenase (378 aa).

Residues Ser45 and Thr67 each contribute to the substrate site. Position 147 (Asp147) interacts with NAD(+). The active site involves Arg209. Position 233 (Asp233) interacts with NAD(+). Residue Glu238 is part of the active site. His255 serves as the catalytic Proton donor. Gly258 contributes to the NAD(+) binding site. Position 259 (Tyr259) interacts with substrate.

Belongs to the D-isomer specific 2-hydroxyacid dehydrogenase family. PdxB subfamily. Homodimer.

It localises to the cytoplasm. The enzyme catalyses 4-phospho-D-erythronate + NAD(+) = (R)-3-hydroxy-2-oxo-4-phosphooxybutanoate + NADH + H(+). It functions in the pathway cofactor biosynthesis; pyridoxine 5'-phosphate biosynthesis; pyridoxine 5'-phosphate from D-erythrose 4-phosphate: step 2/5. In terms of biological role, catalyzes the oxidation of erythronate-4-phosphate to 3-hydroxy-2-oxo-4-phosphonooxybutanoate. The chain is Erythronate-4-phosphate dehydrogenase from Shewanella denitrificans (strain OS217 / ATCC BAA-1090 / DSM 15013).